Reading from the N-terminus, the 1073-residue chain is Ubiquitin carboxyl-terminal hydrolase 53 (1073 aa).

A USP domain is found at 30 to 351; that stretch reads KGLLNEPGQN…QPLLLFYANP (322 aa). The active-site Nucleophile is the Cys41. Residues His66, Cys68, Cys73, Cys76, His132, Cys144, Cys149, His152, Cys165, Cys168, Cys224, and Cys228 each coordinate Zn(2+). His301 acts as the Proton acceptor in catalysis. 2 disordered regions span residues 391-437 and 485-636; these read LKEN…HIDQ and LSHF…PKQK. A compositionally biased stretch (polar residues) spans 407 to 418; that stretch reads KFPTDNISSSNR. The span at 524 to 541 shows a compositional bias: low complexity; that stretch reads QSRASAQIISSSKSQILA. Positions 553-563 are enriched in polar residues; it reads DNGTGYDTDSS. Residues 612–627 are compositionally biased toward low complexity; sequence NISNKPKSSKDPSFSN.

This sequence belongs to the peptidase C19 family. As to quaternary structure, interacts (via the C-terminal region) with the heterodimer TJP1:TJP2. Expressed predominantly in skeletal muscle and heart.

The protein resides in the cell junction. Its subcellular location is the tight junction. It carries out the reaction Thiol-dependent hydrolysis of ester, thioester, amide, peptide and isopeptide bonds formed by the C-terminal Gly of ubiquitin (a 76-residue protein attached to proteins as an intracellular targeting signal).. Deubiquitinase that mediates 'Lys-63'-linked deubiquitination of tight junction proteins, such as MARVELD2 and LSR, and which is involved in the survival of auditory hair cells and hearing. Specifically cleaves 'Lys-63'-linked polyubiquitin chains composed of at least 3 ubiquitin molecules, while it is not able to deubiquitinate substrates with shorter ubiquitin chains: recognizes ubiquitin chain in position S2 and catalyzes en bloc cleavage of polyubiquitin chains from substrate proteins. Probably acts by modulating the barrier properties and mechanical stability of tight junctions via deubiquitination of MARVELD2 and LSR. The sequence is that of Ubiquitin carboxyl-terminal hydrolase 53 from Homo sapiens (Human).